Reading from the N-terminus, the 137-residue chain is Small ribosomal subunit protein uS11 (137 aa).

The segment at 116–137 (EDVTPIPHDGTRPKGGRRGRRV) is disordered.

It belongs to the universal ribosomal protein uS11 family. In terms of assembly, part of the 30S ribosomal subunit.

Located on the platform of the 30S subunit. In Pyrococcus furiosus (strain ATCC 43587 / DSM 3638 / JCM 8422 / Vc1), this protein is Small ribosomal subunit protein uS11.